Here is a 316-residue protein sequence, read N- to C-terminus: D-alanine--D-alanine ligase (316 aa).

Positions 112–310 constitute an ATP-grasp domain; the sequence is KTALKAHGLP…FGKLCRWLVE (199 aa). Residue 139–189 participates in ATP binding; it reads MATPYVVKPNNEGSSVGVYLVNEAANGPPHLSDDMPDEVMVETYAPGRELT. Positions 261, 277, and 279 each coordinate Mg(2+).

Belongs to the D-alanine--D-alanine ligase family. The cofactor is Mg(2+). It depends on Mn(2+) as a cofactor.

The protein resides in the cytoplasm. It carries out the reaction 2 D-alanine + ATP = D-alanyl-D-alanine + ADP + phosphate + H(+). The protein operates within cell wall biogenesis; peptidoglycan biosynthesis. Its function is as follows. Cell wall formation. The polypeptide is D-alanine--D-alanine ligase (Jannaschia sp. (strain CCS1)).